The following is a 451-amino-acid chain: Phosphoglucosamine mutase (451 aa).

The Phosphoserine intermediate role is filled by Ser-102. Positions 102, 243, 245, and 247 each coordinate Mg(2+). Ser-102 bears the Phosphoserine mark.

This sequence belongs to the phosphohexose mutase family. Requires Mg(2+) as cofactor. Post-translationally, activated by phosphorylation.

It catalyses the reaction alpha-D-glucosamine 1-phosphate = D-glucosamine 6-phosphate. Functionally, catalyzes the conversion of glucosamine-6-phosphate to glucosamine-1-phosphate. This chain is Phosphoglucosamine mutase, found in Salinispora tropica (strain ATCC BAA-916 / DSM 44818 / JCM 13857 / NBRC 105044 / CNB-440).